Reading from the N-terminus, the 491-residue chain is PE-PGRS family protein PE_PGRS26 (491 aa).

Residues 1 to 93 enclose the PE domain; that stretch reads MSNVMVVPGM…VGSYAAAEAA (93 aa). Gly residues-rich tracts occupy residues 207–221 and 229–238; these read NGGT…GGGL and GGNGGGGDAG. Disordered stretches follow at residues 207–238, 255–275, and 444–491; these read NGGT…GDAG, DGGA…ARGG, and AGGN…GKHG. Residues 444–485 are compositionally biased toward gly residues; the sequence is AGGNGGDGGPSQGGGNPGFGGDGGTGGPGGVGVPDGIGGANG.

The protein belongs to the mycobacterial PE family. PGRS subfamily.

The protein resides in the cell surface. The chain is PE-PGRS family protein PE_PGRS26 from Mycobacterium tuberculosis (strain ATCC 25618 / H37Rv).